A 516-amino-acid chain; its full sequence is Poly(U)-binding-splicing factor PUF60-B (516 aa).

2 consecutive RRM domains span residues 86–164 (CRVY…RPGS) and 183–261 (NRIY…KAVT). Residues 356 to 398 (TAPASMGTPTSAVQLHTEVKREEDSRRTAEDHSAPVGNGQDSE) form a disordered region. The segment covering 372–388 (TEVKREEDSRRTAEDHS) has biased composition (basic and acidic residues). The 88-residue stretch at 419–506 (TVMVLRNMVG…RKVVAELYDQ (88 aa)) folds into the RRM 3; atypical domain.

It belongs to the RRM half pint family.

Its subcellular location is the nucleus. DNA- and RNA-binding protein, involved in transcription repression and pre-mRNA splicing. This Danio rerio (Zebrafish) protein is Poly(U)-binding-splicing factor PUF60-B (puf60b).